The sequence spans 148 residues: Receptor activity-modifying protein 1 (148 aa).

Residues 1–26 form the signal peptide; sequence MAPGLRGLPRCGLWLLLAHHLFMVTA. 3 cysteine pairs are disulfide-bonded: C27–C82, C40–C72, and C57–C104. The Extracellular portion of the chain corresponds to 27–118; it reads CRDPDYGTLI…RALRDPPNSI (92 aa). Residues 119-140 traverse the membrane as a helical segment; sequence LCPFIALPITVTLLMTALVVWR. The Cytoplasmic segment spans residues 141–148; the sequence is SKRTEGIV.

This sequence belongs to the RAMP family. As to quaternary structure, heterodimer of CALCRL and RAMP1; the interaction induces allosteric modulation of CALCRL function and CGRP1/CALCA and CGRP2/CALCB ligand specificity. Heterodimer of CALCR and RAMP1; interaction forms the AMYR1 receptor complex for amylin/IAPP and CGRP1/CALCA ligands. In terms of tissue distribution, expressed predominantly in the thymus, skeletal muscle, embryonic and adult brain, embryonic and adult lung, and colon.

Its subcellular location is the cell membrane. Accessory protein that interacts with and modulates the function of G-protein coupled receptors including calcitonin gene-related peptide type 1 receptor (CALCRL) and calcitonin receptor (CALCR). Required for the transport of CALCRL to the plasma membrane. Together with CALCRL, form the receptor complex for the calcitonin gene-related peptides CGRP1/CALCA and CGRP2/CALCB. Together with CALCR, form the AMYR1 receptor complex for amylin/IAPP and CGRP1/CALCA. This Mus musculus (Mouse) protein is Receptor activity-modifying protein 1.